Reading from the N-terminus, the 2710-residue chain is Serine/threonine-protein kinase ATR (2710 aa).

The FAT domain maps to 1647-2257 (TLAKASFRCQ…LWMMAAVSKS (611 aa)). A PI3K/PI4K catalytic domain is found at 2368 to 2680 (IADDAEILNS…GVNAAPSLPL (313 aa)). Residues 2374–2380 (ILNSLQK) are G-loop. The segment at 2545–2553 (GLGDRHGEN) is catalytic loop. Positions 2565-2589 (HVDFSCLFDKGLLLEKPEVVPFRFT) are activation loop. The 33-residue stretch at 2678 to 2710 (LPLSVEGQARRLIAEAVSHSNLGKMYVWWMAWF) folds into the FATC domain.

This sequence belongs to the PI3/PI4-kinase family. ATM subfamily.

It is found in the nucleus. The catalysed reaction is L-seryl-[protein] + ATP = O-phospho-L-seryl-[protein] + ADP + H(+). It catalyses the reaction L-threonyl-[protein] + ATP = O-phospho-L-threonyl-[protein] + ADP + H(+). Its function is as follows. Probable serine/threonine kinase. Seems to play a central role in cell-cycle regulation by transmitting DNA damage signals to downstream effectors of cell-cycle progression. May recognize the substrate consensus sequence [ST]-Q and phosphorylate histone variant H2AX to form H2AXS139ph at sites of DNA damage, thereby regulating DNA damage response mechanism. The chain is Serine/threonine-protein kinase ATR from Oryza sativa subsp. indica (Rice).